A 365-amino-acid polypeptide reads, in one-letter code: Protein AC54 (365 aa).

As to quaternary structure, interacts with C42 and VP80. Interacts with protein 38K.

It localises to the virion. Its function is as follows. Structural protein that participates in nucleocapsid assembly. Plays an essential role in the proper localization of the major capsid protein VP39, and the minor capsid protein 38K into the capsid assembly site. The polypeptide is Protein AC54 (AC54) (Lepidoptera (butterflies and moths)).